A 320-amino-acid polypeptide reads, in one-letter code: Coproporphyrin III ferrochelatase (320 aa).

Fe(2+)-binding residues include H194 and E273.

It belongs to the ferrochelatase family.

Its subcellular location is the cytoplasm. It carries out the reaction Fe-coproporphyrin III + 2 H(+) = coproporphyrin III + Fe(2+). It functions in the pathway porphyrin-containing compound metabolism; protoheme biosynthesis. Its function is as follows. Involved in coproporphyrin-dependent heme b biosynthesis. Catalyzes the insertion of ferrous iron into coproporphyrin III to form Fe-coproporphyrin III. The chain is Coproporphyrin III ferrochelatase from Symbiobacterium thermophilum (strain DSM 24528 / JCM 14929 / IAM 14863 / T).